We begin with the raw amino-acid sequence, 75 residues long: Small ribosomal subunit protein bS18 (75 aa).

This sequence belongs to the bacterial ribosomal protein bS18 family. In terms of assembly, part of the 30S ribosomal subunit. Forms a tight heterodimer with protein bS6.

In terms of biological role, binds as a heterodimer with protein bS6 to the central domain of the 16S rRNA, where it helps stabilize the platform of the 30S subunit. In Legionella pneumophila (strain Paris), this protein is Small ribosomal subunit protein bS18.